Consider the following 603-residue polypeptide: F-box only protein 46 (603 aa).

A disordered region spans residues 18–54; the sequence is SKYSQNQPRPPSTALKPPVCPDTSSGTEPDHRPAHLE. Phosphoserine occurs at positions 21 and 67. 4 disordered regions span residues 113 to 165, 235 to 301, 332 to 359, and 412 to 442; these read SRAS…SSGD, EAQR…TRAK, EASE…ARDC, and QSRG…GTTD. Residue T347 is modified to Phosphothreonine. Composition is skewed to pro residues over residues 347–356 and 417–426; these read TPPAPPPPPA and EGPPEPPPAD. Residues 470 to 522 form the F-box domain; that stretch reads RQYMLLLPEHVLVKIFSFLPTRALAALKCTCHHFKGIIEAFGVRATDSRWSRD.

As to quaternary structure, part of a SCF (SKP1-cullin-F-box) protein ligase complex SCF(FBXO46) composed of CUL1, SKP1, RBX1 and FBXO46. Phosphorylated by ATM in response to DNA damage, promoting ubiquitination and degradation by the SCF(FBXO31) complex. Post-translationally, ATM-phosphorylated FBXO46 is ubiquitinated and degradaded by the SCF(FBXO31) complex in response to DNA damage.

It functions in the pathway protein modification; protein ubiquitination. Functionally, substrate-recognition component of the SCF(FBXO46) protein ligase complex, which mediates the ubiquitination and degradation of target proteins. In absence of stress, the SCF(FBXO46) complex catalyzes ubiquitination and degradation of MTOR-phosphorylated FBXO31. The sequence is that of F-box only protein 46 (Fbxo46) from Mus musculus (Mouse).